Consider the following 312-residue polypeptide: Methionyl-tRNA formyltransferase (312 aa).

112 to 115 contacts (6S)-5,6,7,8-tetrahydrofolate; the sequence is SLLP.

It belongs to the Fmt family.

It carries out the reaction L-methionyl-tRNA(fMet) + (6R)-10-formyltetrahydrofolate = N-formyl-L-methionyl-tRNA(fMet) + (6S)-5,6,7,8-tetrahydrofolate + H(+). In terms of biological role, attaches a formyl group to the free amino group of methionyl-tRNA(fMet). The formyl group appears to play a dual role in the initiator identity of N-formylmethionyl-tRNA by promoting its recognition by IF2 and preventing the misappropriation of this tRNA by the elongation apparatus. This chain is Methionyl-tRNA formyltransferase, found in Dehalococcoides mccartyi (strain ATCC BAA-2266 / KCTC 15142 / 195) (Dehalococcoides ethenogenes (strain 195)).